Here is a 221-residue protein sequence, read N- to C-terminus: Deoxyribose-phosphate aldolase (221 aa).

Asp91 acts as the Proton donor/acceptor in catalysis. The active-site Schiff-base intermediate with acetaldehyde is Lys153. Lys182 serves as the catalytic Proton donor/acceptor.

This sequence belongs to the DeoC/FbaB aldolase family. DeoC type 1 subfamily.

The protein localises to the cytoplasm. The enzyme catalyses 2-deoxy-D-ribose 5-phosphate = D-glyceraldehyde 3-phosphate + acetaldehyde. Its pathway is carbohydrate degradation; 2-deoxy-D-ribose 1-phosphate degradation; D-glyceraldehyde 3-phosphate and acetaldehyde from 2-deoxy-alpha-D-ribose 1-phosphate: step 2/2. Functionally, catalyzes a reversible aldol reaction between acetaldehyde and D-glyceraldehyde 3-phosphate to generate 2-deoxy-D-ribose 5-phosphate. In Clostridium botulinum (strain Eklund 17B / Type B), this protein is Deoxyribose-phosphate aldolase.